Reading from the N-terminus, the 29-residue chain is Omega-conotoxins GVIIA/GVIIB (29 aa).

Disulfide bonds link Cys1-Cys16, Cys8-Cys19, and Cys15-Cys26. 2 positions are modified to 4-hydroxyproline: Pro4 and Pro7.

As to expression, expressed by the venom duct.

Its subcellular location is the secreted. Omega-conotoxins act at presynaptic membranes, they bind and block voltage-gated calcium channels (Cav). This Conus geographus (Geography cone) protein is Omega-conotoxins GVIIA/GVIIB.